The sequence spans 436 residues: GTPase Der (436 aa).

EngA-type G domains lie at 4-167 and 176-351; these read PVIA…PKIE and IRFS…ESHS. GTP is bound by residues 10-17, 57-61, 119-122, 182-189, 229-233, and 294-297; these read GRPNVGKS, DTGGI, NKVD, DTAGM, and NKWD. The KH-like domain maps to 352–436; that stretch reads IRVQTNVLND…PIHIIARARD (85 aa).

The protein belongs to the TRAFAC class TrmE-Era-EngA-EngB-Septin-like GTPase superfamily. EngA (Der) GTPase family. In terms of assembly, associates with the 50S ribosomal subunit.

Its function is as follows. GTPase that plays an essential role in the late steps of ribosome biogenesis. The polypeptide is GTPase Der (Bacillus mycoides (strain KBAB4) (Bacillus weihenstephanensis)).